The chain runs to 160 residues: ATP synthase subunit delta, mitochondrial (160 aa).

Residues 1-22 (MFRQSLRSIARTRTGTIGVRTY) constitute a mitochondrion transit peptide.

In terms of assembly, F-type ATP synthases have 2 components, the catalytic core F(1) and the membrane-embedded component F(0), linked together by a central stalk and a peripheral stalk. The central stalk, also called rotor shaft, is often seen as part of F(1). The peripheral stalk is seen as part of F(0). F(0) contains the membrane channel next to the rotor. F-type ATP synthases form dimers but each monomer functions independently in ATP generation. The dimer consists of 18 different polypeptides: ATP1 (subunit alpha, part of F(1), 3 molecules per monomer), ATP2 (subunit beta, part of F(1), 3 molecules per monomer), ATP3 (subunit gamma, part of the central stalk), ATP4 (subunit b, part of the peripheral stalk), ATP5/OSCP (subunit 5/OSCP, part of the peripheral stalk), ATP6 (subunit a, part of the peripheral stalk), ATP7 (subunit d, part of the peripheral stalk), ATP8 (subunit 8, part of the peripheral stalk), OLI1 (subunit c, part of the rotor, 10 molecules per monomer), ATP14 (subunit h, part of the peripheral stalk), ATP15 (subunit epsilon, part of the central stalk), ATP16 (subunit delta, part of the central stalk), ATP17 (subunit f, part of the peripheral stalk), ATP18 (subunit i/j, part of the peripheral stalk). Dimer-specific subunits are ATP19 (subunit k, at interface between monomers), ATP20 (subunit g, at interface between monomers), TIM11 (subunit e, at interface between monomers). Also contains subunit L.

Its subcellular location is the mitochondrion inner membrane. Functionally, mitochondrial membrane ATP synthase (F(1)F(0) ATP synthase or Complex V) produces ATP from ADP in the presence of a proton gradient across the membrane which is generated by electron transport complexes of the respiratory chain. F-type ATP synthases consist of two structural domains, F(1) - containing the extramembraneous catalytic core, and F(0) - containing the membrane proton channel, linked together by a central stalk and a peripheral stalk. During catalysis, ATP synthesis in the catalytic domain of F(1) is coupled via a rotary mechanism of the central stalk subunits to proton translocation. Part of the complex F(1) domain and the central stalk which is part of the complex rotary element. Rotation of the central stalk against the surrounding alpha/ATP1(3)beta/ATP2(3) subunits leads to hydrolysis of ATP in three separate catalytic sites on the beta/ATP2 subunits. The sequence is that of ATP synthase subunit delta, mitochondrial from Pichia angusta (Yeast).